A 145-amino-acid polypeptide reads, in one-letter code: Small ribosomal subunit protein uS9 (145 aa).

It belongs to the universal ribosomal protein uS9 family.

The protein resides in the cytoplasm. The sequence is that of Small ribosomal subunit protein uS9 (RPS16) from Gossypium hirsutum (Upland cotton).